The following is a 491-amino-acid chain: MALEFTLNHVAPAAAVDCLVVGAYADHTLTPAAQALDAASGGRLTSLAQRGDLSGKTGATTLLHDLPGVSAPRVLVVGLGDAARFGVPQYLKAVGDAVRALKAGATRSALFTLSEVAIKDRDAAWAIRQAVIAADHAAYRYTATLGKKKTDDAGLAQLAIAGDDALALAQGQAIAAGVEFARELGNLPPNYCTPAYLAEVGVKFAGEHDGAEAEILDEHQMEALGMGSLLAVARGSANRPRLVVLKWTGGGDAKPYVLVGKGITFDTGGVNLKTQGGIEEMKYDMCGGANVIGTFVAAVKAKLPLNLVVVVPAVENAIDGNAYRPSDVITSMSGKTIEVGNTDAEGRLILCDALTYAQRFEPAALVDVATLTGACMVALGHQTAGLMSKHDDLANELLAAGEHVFDRAWRLPLWDEYQPMLDSTFADVYNIGGRWAGAITAGCFLSRFTEGQRWAHLDIAGVASDEGKRGMATGRPVGLLSQWLLDQAARA.

Positions 261 and 266 each coordinate Mn(2+). K273 is an active-site residue. Mn(2+) contacts are provided by D284, D343, and E345. R347 is a catalytic residue.

Belongs to the peptidase M17 family. The cofactor is Mn(2+).

It localises to the cytoplasm. It catalyses the reaction Release of an N-terminal amino acid, Xaa-|-Yaa-, in which Xaa is preferably Leu, but may be other amino acids including Pro although not Arg or Lys, and Yaa may be Pro. Amino acid amides and methyl esters are also readily hydrolyzed, but rates on arylamides are exceedingly low.. The enzyme catalyses Release of an N-terminal amino acid, preferentially leucine, but not glutamic or aspartic acids.. Presumably involved in the processing and regular turnover of intracellular proteins. Catalyzes the removal of unsubstituted N-terminal amino acids from various peptides. This chain is Probable cytosol aminopeptidase, found in Stenotrophomonas maltophilia (strain K279a).